A 63-amino-acid polypeptide reads, in one-letter code: Large ribosomal subunit protein bL28 (63 aa).

This sequence belongs to the bacterial ribosomal protein bL28 family.

This chain is Large ribosomal subunit protein bL28, found in Alkaliphilus metalliredigens (strain QYMF).